We begin with the raw amino-acid sequence, 148 residues long: ATP synthase epsilon chain (148 aa).

It belongs to the ATPase epsilon chain family. As to quaternary structure, F-type ATPases have 2 components, CF(1) - the catalytic core - and CF(0) - the membrane proton channel. CF(1) has five subunits: alpha(3), beta(3), gamma(1), delta(1), epsilon(1). CF(0) has three main subunits: a, b and c.

The protein resides in the cell membrane. Functionally, produces ATP from ADP in the presence of a proton gradient across the membrane. In Streptococcus thermophilus (strain ATCC BAA-250 / LMG 18311), this protein is ATP synthase epsilon chain.